We begin with the raw amino-acid sequence, 59 residues long: Three-finger toxin MS1 (59 aa).

4 cysteine pairs are disulfide-bonded: cysteine 3-cysteine 22, cysteine 17-cysteine 39, cysteine 41-cysteine 52, and cysteine 53-cysteine 58.

This sequence belongs to the three-finger toxin family. Short-chain subfamily. Type I alpha-neurotoxin sub-subfamily. Expressed by the venom gland.

The protein localises to the secreted. In terms of biological role, produces peripheral paralysis by blocking neuromuscular transmission at the postsynaptic site. Binds to and inhibits the endogenous nicotinic acetylcholine receptors (nAChR) in human rhabdomyosarcoma TE 671 cell line with an IC(50) of 48.2 mM. This neurotoxin is lethal to mice by intraperitoneal injection and to zebrafish by injection at the back of the dorsolateral region. This chain is Three-finger toxin MS1, found in Micrurus surinamensis (Surinam coral snake).